Reading from the N-terminus, the 396-residue chain is NADH-quinone oxidoreductase subunit D (396 aa).

Belongs to the complex I 49 kDa subunit family. NDH-1 is composed of 14 different subunits. Subunits NuoB, C, D, E, F, and G constitute the peripheral sector of the complex.

The protein localises to the cell inner membrane. The catalysed reaction is a quinone + NADH + 5 H(+)(in) = a quinol + NAD(+) + 4 H(+)(out). NDH-1 shuttles electrons from NADH, via FMN and iron-sulfur (Fe-S) centers, to quinones in the respiratory chain. The immediate electron acceptor for the enzyme in this species is believed to be ubiquinone. Couples the redox reaction to proton translocation (for every two electrons transferred, four hydrogen ions are translocated across the cytoplasmic membrane), and thus conserves the redox energy in a proton gradient. This chain is NADH-quinone oxidoreductase subunit D, found in Methylorubrum extorquens (strain PA1) (Methylobacterium extorquens).